Reading from the N-terminus, the 309-residue chain is GalNAc(5)-diNAcBac-PP-undecaprenol beta-1,3-glucosyltransferase (309 aa).

Residues 273–291 form a helical membrane-spanning segment; that stretch reads SLSIKINAPALILLILSII.

It belongs to the glycosyltransferase 2 family.

It is found in the membrane. It carries out the reaction [alpha-D-GalNAc-(1-&gt;4)]4-alpha-D-GalNAc-(1-&gt;3)-alpha-D-diNAcBac-tri-trans,hepta-cis-undecaprenyl diphosphate + UDP-alpha-D-glucose = [alpha-D-GalNAc-(1-&gt;4)]2-[beta-D-Glc-(1-&gt;3)]-[alpha-D-GalNAc-(1-&gt;4)]2-alpha-D-GalNAc-(1-&gt;3)-alpha-D-diNAcBac-tri-trans,hepta-cis-undecaprenyl diphosphate + UDP + H(+). It participates in protein modification; protein glycosylation. Glucosyltransferase that adds he final branching glucose to complete the final heptasaccharide structure in the N-linked protein glycosylation pathway. This Campylobacter jejuni subsp. jejuni serotype O:2 (strain ATCC 700819 / NCTC 11168) protein is GalNAc(5)-diNAcBac-PP-undecaprenol beta-1,3-glucosyltransferase (pglI).